The chain runs to 312 residues: MNNIHTPVLATEMLSYLAPVDNETYLDCTFGAGGYSKLILSNCNCKVIAFDRDPAVISIASQFYQQYPNRFTFFNENFVEANKYLSKLDKLNGIVMDLGVSSMQLDEANRGFSFRYDAELDMRMSQKGYKASEFVNEASEHQLADIIYKFGEENKANKIAKHIVLARKKKPITTTLQLANIIREAVGYNNYYKKNKIDSATKTFQAIRIFINDELSAIQNFLNQSLELLAVNGRLIVVSFHALEDAIIKKFMHQNAVKKVAQSKYSTNRQSPLQNGVLYLLTKKIAVPTRTEIINNPRSRSARLRAALKINE.

Residues 33–35 (GGY), Asp-51, Phe-78, Asp-97, and Gln-104 contribute to the S-adenosyl-L-methionine site.

Belongs to the methyltransferase superfamily. RsmH family.

Its subcellular location is the cytoplasm. The catalysed reaction is cytidine(1402) in 16S rRNA + S-adenosyl-L-methionine = N(4)-methylcytidine(1402) in 16S rRNA + S-adenosyl-L-homocysteine + H(+). Specifically methylates the N4 position of cytidine in position 1402 (C1402) of 16S rRNA. The polypeptide is Ribosomal RNA small subunit methyltransferase H (Orientia tsutsugamushi (strain Ikeda) (Rickettsia tsutsugamushi)).